A 497-amino-acid chain; its full sequence is MSGDPGLEALKARVAEVPLGPEIEETGRIATLADGLVEVEGLPGARLGEVVRFAGGAEGLVLTLDPETVQVALLDPGAALGSGTEVRRTGQLLSVPVGQGLLGRVVDPLGRPLDGLPAILPEARLEIERPAPGIVDRDMVAEPVETGLLVVDALFAVGRGQRELIIGERATGKTSLAVDAIVNQAASDIVCFYVAIGQRTTAVRRVIETVREKGAFARTVFVVAPATASPGLRWIAPFAATSMAEWVRDRGGHALIVYDDLTKHAAVHRELALLARQPPGREAYPGDIFYLHARLLERSAKLSAVNGGGSLTALPIAEIEAGNLSAYIPTNLISIADGQIVTSAALFAANQRPAVDIGLSVSRVGGKAQRGALKAVAGRVRLDYAQYLEMKMFSRFGGFGDAALRARLARGERIGALLAQPRTTPLSTPVQVALLAALAEGALDDVPLEDLARLKAALGPVLAADASLGPFRAAPDRLEPETRAALLACVRRAREAP.

Residue 167 to 174 coordinates ATP; the sequence is GERATGKT.

This sequence belongs to the ATPase alpha/beta chains family. As to quaternary structure, F-type ATPases have 2 components, CF(1) - the catalytic core - and CF(0) - the membrane proton channel. CF(1) has five subunits: alpha(3), beta(3), gamma(1), delta(1), epsilon(1). CF(0) has four main subunits: a(1), b(1), b'(1) and c(9-12).

It localises to the cell inner membrane. It carries out the reaction ATP + H2O + 4 H(+)(in) = ADP + phosphate + 5 H(+)(out). Functionally, produces ATP from ADP in the presence of a proton gradient across the membrane. The alpha chain is a regulatory subunit. In Cereibacter sphaeroides (strain ATCC 17023 / DSM 158 / JCM 6121 / CCUG 31486 / LMG 2827 / NBRC 12203 / NCIMB 8253 / ATH 2.4.1.) (Rhodobacter sphaeroides), this protein is ATP synthase subunit alpha 2.